The sequence spans 236 residues: Large ribosomal subunit protein uL1 (236 aa).

The protein belongs to the universal ribosomal protein uL1 family. In terms of assembly, part of the 50S ribosomal subunit.

In terms of biological role, binds directly to 23S rRNA. The L1 stalk is quite mobile in the ribosome, and is involved in E site tRNA release. Its function is as follows. Protein L1 is also a translational repressor protein, it controls the translation of the L11 operon by binding to its mRNA. The chain is Large ribosomal subunit protein uL1 from Corynebacterium glutamicum (strain R).